We begin with the raw amino-acid sequence, 832 residues long: Cation/H(+) antiporter 21 (832 aa).

Transmembrane regions (helical) follow at residues 33 to 55 (ISAA…RILY), 61 to 81 (LCLP…PTVL), 99 to 119 (LLET…GLGL), 132 to 152 (VIIA…LYYL), 161 to 181 (ILAG…PDLA), 200 to 220 (CAAV…MAIF), 236 to 256 (STIA…AWIF), 278 to 298 (IICS…AFLF), 319 to 339 (FLSG…ADIG), 352 to 372 (VVTS…SIFL), 379 to 399 (GLAI…ILNA), and 413 to 433 (HLTL…AIAY). The segment covering 792-802 (RQTAENNNQEP) has biased composition (polar residues). The segment at 792-832 (RQTAENNNQEPVQGKAKTDHEATPFMEDEDDEVEHQYSMRR) is disordered.

This sequence belongs to the monovalent cation:proton antiporter 2 (CPA2) transporter (TC 2.A.37) family. CHX (TC 2.A.37.4) subfamily. As to expression, specifically expressed in root endodermal cells. Expressed in seedlings, roots, leaves, flowers, flower buds and pollen.

Its subcellular location is the cell membrane. Its function is as follows. Operates as a Na(+)/H(+) antiporter that plays a role in regulation of xylem Na(+) concentration and, consequently, Na(+) accumulation in the leaf. Required for pollen tube guidance, but not for normal pollen development. May also be involved in the development or function of the female gametophyte. This chain is Cation/H(+) antiporter 21 (CHX21), found in Arabidopsis thaliana (Mouse-ear cress).